The chain runs to 213 residues: ATP phosphoribosyltransferase (213 aa).

This sequence belongs to the ATP phosphoribosyltransferase family. Short subfamily. In terms of assembly, heteromultimer composed of HisG and HisZ subunits.

It is found in the cytoplasm. It catalyses the reaction 1-(5-phospho-beta-D-ribosyl)-ATP + diphosphate = 5-phospho-alpha-D-ribose 1-diphosphate + ATP. Its pathway is amino-acid biosynthesis; L-histidine biosynthesis; L-histidine from 5-phospho-alpha-D-ribose 1-diphosphate: step 1/9. Catalyzes the condensation of ATP and 5-phosphoribose 1-diphosphate to form N'-(5'-phosphoribosyl)-ATP (PR-ATP). Has a crucial role in the pathway because the rate of histidine biosynthesis seems to be controlled primarily by regulation of HisG enzymatic activity. The protein is ATP phosphoribosyltransferase of Variovorax paradoxus (strain S110).